Reading from the N-terminus, the 487-residue chain is Serralysin (487 aa).

Residues 1 to 16 (MQSTKKAIEITESSLA) constitute a propeptide that is removed on maturation. H192 is a binding site for Zn(2+). The active site involves E193. Zn(2+)-binding residues include H196, H202, and Y232. Ca(2+)-binding residues include R269, G271, T273, D301, G303, G304, D306, T343, E345, G350, G352, D354, N359, A361, N363, G367, G368, A369, G370, D372, G376, G377, G378, G379, D381, G385, G386, A387, G388, D390, D399, D406, and D416. 2 Hemolysin-type calcium-binding repeats span residues 348–365 (IGGS…NNVL) and 366–383 (KGGA…ADEL).

It belongs to the peptidase M10B family. Ca(2+) is required as a cofactor. Requires Zn(2+) as cofactor.

The protein localises to the secreted. It carries out the reaction Preferential cleavage of bonds with hydrophobic residues in P1'.. Its function is as follows. Has insecticidal activity against the locust M.palpalis. When administered orally to locusts at a low dose it causes them to lie on their sides exhibiting sporadic limb movements and muscular twitching, followed by full recovery. When administered at higher doses the same symptoms are observed, followed by death. The polypeptide is Serralysin (Serratia marcescens).